The primary structure comprises 339 residues: Protein RecA (339 aa).

66 to 73 is a binding site for ATP; it reads GPESSGKT.

It belongs to the RecA family.

It localises to the cytoplasm. In terms of biological role, can catalyze the hydrolysis of ATP in the presence of single-stranded DNA, the ATP-dependent uptake of single-stranded DNA by duplex DNA, and the ATP-dependent hybridization of homologous single-stranded DNAs. It interacts with LexA causing its activation and leading to its autocatalytic cleavage. The polypeptide is Protein RecA (Geobacter metallireducens (strain ATCC 53774 / DSM 7210 / GS-15)).